The primary structure comprises 115 residues: MSAALLLATLLMTGLGQVAQKLTVEHWRLVAADGWTARLRSPWPWLALLALGLGLLCWLLLLQRVEVGSAYPMLALNFVLVTLAARFVFDEPVDRRHLAGLLLIVAGVALLGRSA.

3 helical membrane-spanning segments follow: residues 42–62 (PWPW…LLLL), 65–85 (VEVG…TLAA), and 93–112 (VDRR…ALLG). The 68-residue stretch at 46–113 (LALLALGLGL…IVAGVALLGR (68 aa)) folds into the EamA domain.

It belongs to the ArnE family. As to quaternary structure, heterodimer of ArnE and ArnF.

The protein resides in the cell inner membrane. It participates in bacterial outer membrane biogenesis; lipopolysaccharide biosynthesis. Functionally, translocates 4-amino-4-deoxy-L-arabinose-phosphoundecaprenol (alpha-L-Ara4N-phosphoundecaprenol) from the cytoplasmic to the periplasmic side of the inner membrane. The sequence is that of Probable 4-amino-4-deoxy-L-arabinose-phosphoundecaprenol flippase subunit ArnE from Pseudomonas aeruginosa (strain LESB58).